Here is a 368-residue protein sequence, read N- to C-terminus: Quinolinate synthase (368 aa).

Iminosuccinate contacts are provided by histidine 46 and serine 63. Residue cysteine 110 participates in [4Fe-4S] cluster binding. Iminosuccinate is bound by residues 141 to 143 (YVN) and serine 162. Cysteine 230 provides a ligand contact to [4Fe-4S] cluster. Residues 256 to 258 (HPE) and threonine 273 contribute to the iminosuccinate site. Cysteine 320 lines the [4Fe-4S] cluster pocket.

Belongs to the quinolinate synthase family. Type 3 subfamily. [4Fe-4S] cluster serves as cofactor.

Its subcellular location is the cytoplasm. It catalyses the reaction iminosuccinate + dihydroxyacetone phosphate = quinolinate + phosphate + 2 H2O + H(+). It functions in the pathway cofactor biosynthesis; NAD(+) biosynthesis; quinolinate from iminoaspartate: step 1/1. Its function is as follows. Catalyzes the condensation of iminoaspartate with dihydroxyacetone phosphate to form quinolinate. The protein is Quinolinate synthase of Bacillus cereus (strain Q1).